A 646-amino-acid polypeptide reads, in one-letter code: Lipoteichoic acid synthase (646 aa).

Residues 1–7 (MSSQKKK) lie on the Cytoplasmic side of the membrane. The chain crosses the membrane as a helical span at residues 8–28 (ISLFAFFLLTVITITLKTYFS). Residues 29 to 43 (YYVDFSLGVKGLVQN) lie on the Extracellular side of the membrane. A helical membrane pass occupies residues 44–64 (LILLMNPYSLVALVLSVFLFF). Topologically, residues 65 to 68 (KGKK) are cytoplasmic. A helical transmembrane segment spans residues 69–89 (AFWFMFIGGFLLTFLLYANVV). Topologically, residues 90–119 (YFRFFSDFLTFSTLNQVGNVESMGGAVSAS) are extracellular. Residues 120-140 (FKWYDFVYFIDTLVYLFILIF) traverse the membrane as a helical segment. The Cytoplasmic segment spans residues 141-153 (KTKWLDTKAFSKK). Residues 154-174 (FVPVVMAASVALFFLNLAFAE) form a helical membrane-spanning segment. The Extracellular segment spans residues 175 to 646 (TDRPELLTRT…ETGPKANSKK (472 aa)). Mn(2+) is bound by residues E255 and T300. Residue T300 is part of the active site. H416 serves as a coordination point for substrate. Mn(2+) contacts are provided by D475 and H476. Residues 623–638 (NPDFKKVNPSKYKYET) are compositionally biased toward basic and acidic residues. The interval 623-646 (NPDFKKVNPSKYKYETGPKANSKK) is disordered.

The protein belongs to the LTA synthase family. Post-translationally, proteolytically cleaved.

The protein localises to the cell membrane. Its subcellular location is the secreted. It participates in cell wall biogenesis; lipoteichoic acid biosynthesis. Functionally, catalyzes the polymerization of lipoteichoic acid (LTA) polyglycerol phosphate, a reaction that presumably uses phosphatidylglycerol (PG) as substrate. Is required for staphylococcal growth and cell division process. This Staphylococcus aureus (strain bovine RF122 / ET3-1) protein is Lipoteichoic acid synthase (ltaS).